We begin with the raw amino-acid sequence, 185 residues long: Dirigent protein 12 (185 aa).

Residues Met1–Ser25 form the signal peptide. Cys37 and Cys184 are disulfide-bonded. 2 N-linked (GlcNAc...) asparagine glycosylation sites follow: Asn56 and Asn120.

The protein belongs to the plant dirigent protein family. In terms of assembly, homodimer. Seed coat specific expression.

Its subcellular location is the secreted. It is found in the extracellular space. The protein resides in the apoplast. In terms of biological role, dirigent proteins impart stereoselectivity on the phenoxy radical-coupling reaction, yielding optically active lignans from two molecules of coniferyl alcohol in the biosynthesis of lignans, flavonolignans, and alkaloids and thus plays a central role in plant secondary metabolism. Required for seed accumulation of neolignans. The protein is Dirigent protein 12 (DIR12) of Arabidopsis thaliana (Mouse-ear cress).